Consider the following 85-residue polypeptide: Large ribosomal subunit protein bL27 (85 aa).

The disordered stretch occupies residues 1–20 (MATKKAGGSTRNGRDSEAKR).

It belongs to the bacterial ribosomal protein bL27 family.

This is Large ribosomal subunit protein bL27 from Haemophilus influenzae (strain PittEE).